We begin with the raw amino-acid sequence, 260 residues long: Salicylic acid-binding protein 2 (260 aa).

3 residues coordinate salicylate: Ala-13, Ser-81, and Lys-159. The Acyl-ester intermediate role is filled by Ser-81. Active-site charge relay system residues include Asp-210 and His-238. Positions 238, 253, and 257 each coordinate salicylate.

It belongs to the AB hydrolase superfamily. Methylesterase family.

The catalysed reaction is methyl salicylate + H2O = salicylate + methanol + H(+). The protein operates within plant hormone biosynthesis. Its activity is regulated as follows. Esterase activity is down-regulated by salicylic acid (SA) or by tetraFA, a synthetic SA analog. Its function is as follows. Required to convert methyl salicylate (MeSA) to salicylic acid (SA) as part of the signal transduction pathways that activate systemic acquired resistance in systemic tissue. MeSA is believed to be an inactive form that needs to be demethylated to exert a biological effect. Also able to catalyze the conversion of acibenzolar-S-methyl into acibenzolar to induce systemic acquired resistance. The polypeptide is Salicylic acid-binding protein 2 (Nicotiana tabacum (Common tobacco)).